Consider the following 250-residue polypeptide: Ribosomal RNA small subunit methyltransferase J (250 aa).

S-adenosyl-L-methionine-binding positions include 101-102 (RD), 117-118 (ER), 153-154 (SS), and aspartate 171.

It belongs to the methyltransferase superfamily. RsmJ family.

It is found in the cytoplasm. The enzyme catalyses guanosine(1516) in 16S rRNA + S-adenosyl-L-methionine = N(2)-methylguanosine(1516) in 16S rRNA + S-adenosyl-L-homocysteine + H(+). Its function is as follows. Specifically methylates the guanosine in position 1516 of 16S rRNA. This Escherichia coli O81 (strain ED1a) protein is Ribosomal RNA small subunit methyltransferase J.